Consider the following 375-residue polypeptide: Ribosomal RNA large subunit methyltransferase G (375 aa).

The protein belongs to the methyltransferase superfamily. RlmG family.

The protein resides in the cytoplasm. The catalysed reaction is guanosine(1835) in 23S rRNA + S-adenosyl-L-methionine = N(2)-methylguanosine(1835) in 23S rRNA + S-adenosyl-L-homocysteine + H(+). Specifically methylates the guanine in position 1835 (m2G1835) of 23S rRNA. The protein is Ribosomal RNA large subunit methyltransferase G of Erwinia tasmaniensis (strain DSM 17950 / CFBP 7177 / CIP 109463 / NCPPB 4357 / Et1/99).